We begin with the raw amino-acid sequence, 200 residues long: Pyridoxal 5'-phosphate synthase subunit PdxT (200 aa).

Position 52–54 (G52–S54) interacts with L-glutamine. Residue C84 is the Nucleophile of the active site. L-glutamine-binding positions include R116 and I145–R146. Residues H181 and E183 each act as charge relay system in the active site.

Belongs to the glutaminase PdxT/SNO family. In the presence of PdxS, forms a dodecamer of heterodimers. Only shows activity in the heterodimer.

It carries out the reaction aldehydo-D-ribose 5-phosphate + D-glyceraldehyde 3-phosphate + L-glutamine = pyridoxal 5'-phosphate + L-glutamate + phosphate + 3 H2O + H(+). The catalysed reaction is L-glutamine + H2O = L-glutamate + NH4(+). It participates in cofactor biosynthesis; pyridoxal 5'-phosphate biosynthesis. Catalyzes the hydrolysis of glutamine to glutamate and ammonia as part of the biosynthesis of pyridoxal 5'-phosphate. The resulting ammonia molecule is channeled to the active site of PdxS. The protein is Pyridoxal 5'-phosphate synthase subunit PdxT of Saccharolobus islandicus (strain M.16.27) (Sulfolobus islandicus).